Consider the following 523-residue polypeptide: 2-isopropylmalate synthase (523 aa).

Positions 5 to 267 (VIIFDTTLRD…HTAINHQEIW (263 aa)) constitute a Pyruvate carboxyltransferase domain. Residues Asp-14, His-202, His-204, and Asn-238 each contribute to the Mn(2+) site. Residues 392–523 (RLDYFSVQSG…QHNENNKETV (132 aa)) are regulatory domain.

The protein belongs to the alpha-IPM synthase/homocitrate synthase family. LeuA type 1 subfamily. In terms of assembly, homodimer. Mn(2+) serves as cofactor.

It localises to the cytoplasm. It carries out the reaction 3-methyl-2-oxobutanoate + acetyl-CoA + H2O = (2S)-2-isopropylmalate + CoA + H(+). It functions in the pathway amino-acid biosynthesis; L-leucine biosynthesis; L-leucine from 3-methyl-2-oxobutanoate: step 1/4. Its function is as follows. Catalyzes the condensation of the acetyl group of acetyl-CoA with 3-methyl-2-oxobutanoate (2-ketoisovalerate) to form 3-carboxy-3-hydroxy-4-methylpentanoate (2-isopropylmalate). In Shigella flexneri serotype 5b (strain 8401), this protein is 2-isopropylmalate synthase.